The sequence spans 782 residues: cGMP-specific 3',5'-cyclic phosphodiesterase gamma (782 aa).

Over 1–69 (MKHMFKNILF…LCDNMYSKKY (69 aa)) the chain is Cytoplasmic. The helical transmembrane segment at 70–90 (VILVSHLISLLLMYSVCLIVG) threads the bilayer. The Extracellular segment spans residues 91 to 97 (NINDLFS). The chain crosses the membrane as a helical span at residues 98 to 118 (VLKLTYILLHTFTAINIILIL). The Cytoplasmic segment spans residues 119-135 (TLHATHYVEMFKSIKGE). A helical membrane pass occupies residues 136-156 (IFIFYIMMIFVIWCSWLFILF). Topologically, residues 157-181 (NNIKDLLPIVVNVNNFLYATYANNK) are extracellular. A helical transmembrane segment spans residues 182-202 (INIVLGFFAYLPIFYLITIIP). At 203–208 (CRICYS) the chain is on the cytoplasmic side. Residues 209–229 (CAFDILFFIMKVAIFSVYYLI) traverse the membrane as a helical segment. Topologically, residues 230–239 (TMKSYILTDN) are extracellular. Residues 240–260 (IFMIISALVGSLFIFVIRYII) form a helical membrane-spanning segment. The Cytoplasmic portion of the chain corresponds to 261–782 (EIQRRLSFHN…YAPNLNIYKL (522 aa)). The disordered stretch occupies residues 376–396 (GSKEEPEAESESECVDESKEG). A compositionally biased stretch (acidic residues) spans 381 to 390 (PEAESESECV). Residues 423-751 (YEEKENEILK…SKWTKIEKDE (329 aa)) form the PDEase domain. His504 serves as the catalytic Proton donor. 504–508 (HNSIH) serves as a coordination point for a nucleoside 3',5'-cyclic phosphate. A divalent metal cation-binding residues include His508, His544, Asp545, and Asp654. Positions 545, 654, and 706 each coordinate a nucleoside 3',5'-cyclic phosphate.

This sequence belongs to the cyclic nucleotide phosphodiesterase family. The cofactor is a divalent metal cation.

Its subcellular location is the membrane. The protein localises to the endoplasmic reticulum membrane. The enzyme catalyses 3',5'-cyclic GMP + H2O = GMP + H(+). It functions in the pathway purine metabolism; 3',5'-cyclic GMP degradation; GMP from 3',5'-cyclic GMP: step 1/1. Its function is as follows. Specifically hydrolyzes the second messenger cGMP, which is a key regulator of many important physiological processes. Probably by regulating cGMP levels, required for sporozoite motility and invasion of the mosquito salivary glands. This Plasmodium yoelii protein is cGMP-specific 3',5'-cyclic phosphodiesterase gamma.